Reading from the N-terminus, the 630-residue chain is Very-long-chain aldehyde decarbonylase GL1-7 (630 aa).

4 helical membrane-spanning segments follow: residues 93 to 113 (LYLD…YAII), 126 to 146 (GALI…YWFH), 185 to 205 (FLLF…SVLA), and 325 to 345 (VWYM…AWIY). The Fatty acid hydroxylase domain maps to 133–272 (LHMGPVEFLY…MPFYDYIYNT (140 aa)).

It belongs to the sterol desaturase family. Homodimer. As to expression, expressed in panicles at low levels.

The protein resides in the endoplasmic reticulum membrane. It carries out the reaction a long-chain fatty aldehyde + 2 NADPH + O2 + H(+) = a long-chain alkane + formate + 2 NADP(+) + H2O. Its function is as follows. Aldehyde decarbonylase involved in the conversion of aldehydes to alkanes. Core component of a very-long-chain alkane synthesis complex. This Oryza sativa subsp. japonica (Rice) protein is Very-long-chain aldehyde decarbonylase GL1-7.